Consider the following 483-residue polypeptide: Endoplasmic reticulum lectin 1 (483 aa).

The N-terminal stretch at 1–33 (MEEGGGGVRSLVPGGPVLLVLCGLLEASGGGRA) is a signal peptide. 2 MRH domains span residues 111–246 (SSCS…LCSH) and 342–469 (SYCF…ICKI). A disulfide bridge links C113 with C126. N-linked (GlcNAc...) asparagine glycosylation is present at N195. Intrachain disulfides connect C199–C232, C215–C244, C344–C357, C421–C455, and C436–C467.

May form a complex with OS9, HSPA5, SYVN1, and SEL1L with which it interacts directly. Interacts (via PRKCSH 2 domain) with KREMEN2 (when glycosylated). Interacts with HSPA5. Isoform 1 and isoform 2 are N-glycosylated.

The protein localises to the endoplasmic reticulum lumen. Functionally, probable lectin that binds selectively to improperly folded lumenal proteins. May function in endoplasmic reticulum quality control and endoplasmic reticulum-associated degradation (ERAD) of both non-glycosylated proteins and glycoproteins. The polypeptide is Endoplasmic reticulum lectin 1 (ERLEC1) (Homo sapiens (Human)).